We begin with the raw amino-acid sequence, 380 residues long: Cytochrome b (380 aa).

The next 4 helical transmembrane spans lie at 34–54 (FGSL…LLAM), 78–99 (WLIR…YLHI), 114–134 (WNTG…GYVL), and 179–199 (FFAL…IHLT). Histidine 84 and histidine 98 together coordinate heme b. 2 residues coordinate heme b: histidine 183 and histidine 197. Histidine 202 provides a ligand contact to a ubiquinone. The next 4 membrane-spanning stretches (helical) occupy residues 227–247 (LKDL…ALFT), 289–309 (LGGV…PFLH), 321–341 (LSQL…WVGS), and 348–368 (FIII…VLLP).

Belongs to the cytochrome b family. The cytochrome bc1 complex contains 11 subunits: 3 respiratory subunits (MT-CYB, CYC1 and UQCRFS1), 2 core proteins (UQCRC1 and UQCRC2) and 6 low-molecular weight proteins (UQCRH/QCR6, UQCRB/QCR7, UQCRQ/QCR8, UQCR10/QCR9, UQCR11/QCR10 and a cleavage product of UQCRFS1). This cytochrome bc1 complex then forms a dimer. The cofactor is heme b.

It is found in the mitochondrion inner membrane. Its function is as follows. Component of the ubiquinol-cytochrome c reductase complex (complex III or cytochrome b-c1 complex) that is part of the mitochondrial respiratory chain. The b-c1 complex mediates electron transfer from ubiquinol to cytochrome c. Contributes to the generation of a proton gradient across the mitochondrial membrane that is then used for ATP synthesis. This Herpetotheres cachinnans (Laughing falcon) protein is Cytochrome b (MT-CYB).